Consider the following 263-residue polypeptide: MSLSPVIFSIGPVSIYWYSLAYVLGIVFAYWYLHKLDNQKIFTKNFYDSLLTAVIIGIILGGRLGYVLIYDPVLYISNPIEILKTWEGGMSFHGGAIGVLLAVIISCRRHNIPIFYTLDLISCGVPIGLLLGRIGNFINGELFGRVTTMPWGMVFPESGDNLLRHPSQLYEAFFEGALLFVVVNSLFYLNKMRLYYGATTGVAVMLYGVARFMVEFFREPDYQIGYLWFNLTMGQLLSIPMILLGMLIYLGALNFRFNTKSIQ.

A run of 4 helical transmembrane segments spans residues 6–26, 50–70, 85–105, and 112–132; these read VIFS…VLGI, LLTA…VLIY, TWEG…AVII, and IPIF…LLLG. A 1,2-diacyl-sn-glycero-3-phospho-(1'-sn-glycerol) is bound at residue Arg133. A run of 3 helical transmembrane segments spans residues 169–189, 197–217, and 233–253; these read LYEA…LFYL, GATT…VEFF, and MGQL…LGAL.

This sequence belongs to the Lgt family.

It localises to the cell membrane. It carries out the reaction L-cysteinyl-[prolipoprotein] + a 1,2-diacyl-sn-glycero-3-phospho-(1'-sn-glycerol) = an S-1,2-diacyl-sn-glyceryl-L-cysteinyl-[prolipoprotein] + sn-glycerol 1-phosphate + H(+). It functions in the pathway protein modification; lipoprotein biosynthesis (diacylglyceryl transfer). Functionally, catalyzes the transfer of the diacylglyceryl group from phosphatidylglycerol to the sulfhydryl group of the N-terminal cysteine of a prolipoprotein, the first step in the formation of mature lipoproteins. This is Phosphatidylglycerol--prolipoprotein diacylglyceryl transferase from Wolbachia pipientis subsp. Culex pipiens (strain wPip).